A 410-amino-acid polypeptide reads, in one-letter code: Kelch domain-containing protein 10 (410 aa).

The interval 1 to 40 (MSAAQGWDRNRRRGGGAAGGASGVSGAGAAGGGRGTGQLN) is disordered. Position 13 is an omega-N-methylarginine (Arg13). Residues 15-36 (GGAAGGASGVSGAGAAGGGRGT) show a composition bias toward gly residues. 6 Kelch repeats span residues 87–154 (GPDN…DVHV), 155–198 (CNVK…GYIY), 199–260 (STDL…IHAY), 261–319 (NLET…LQTF), 320–364 (QWVK…GSLF), and 365–403 (KIWL…GLTQ). The interval 369-410 (VVPSLLELAWEKLLAAFPNLANLSRTQLLHLGLTQELIERLK) is interaction with CUL2.

This sequence belongs to the KLHDC10 family. As to quaternary structure, component of a CRL2 E3 ubiquitin-protein ligase complex, also named ECS (Elongin BC-CUL2/5-SOCS-box protein) complex, composed of CUL2, Elongin BC (ELOB and ELOC), RBX1 and substrate-specific adapter KLHDC10. Interacts (via the 6 Kelch repeats) with PPP5C.

The protein localises to the nucleus. It is found in the cytoplasm. It functions in the pathway protein modification; protein ubiquitination. Substrate-recognition component of a Cul2-RING (CRL2) E3 ubiquitin-protein ligase complex of the DesCEND (destruction via C-end degrons) pathway, which recognizes a C-degron located at the extreme C-terminus of target proteins, leading to their ubiquitination and degradation. The C-degron recognized by the DesCEND pathway is usually a motif of less than ten residues and can be present in full-length proteins, truncated proteins or proteolytically cleaved forms. The CRL2(KLHDC10) complex specifically recognizes proteins with a proline-glycine (Pro-Gly) or an alanine tail (CAT tail) at the C-terminus, leading to their ubiquitination and degradation. The CRL2(KLHDC10) complex is involved in the ribosome-associated quality control (RQC) pathway, which mediates the extraction of incompletely synthesized nascent chains from stalled ribosomes: CRL2(KLHDC10) acts downstream of NEMF and recognizes CAT tails associated with stalled nascent chains, leading to their ubiquitination and degradation. Participates in the oxidative stress-induced cell death through MAP3K5 activation. Inhibits PPP5C phosphatase activity on MAP3K5. Acts as a regulator of necroptosis. In Rattus norvegicus (Rat), this protein is Kelch domain-containing protein 10.